The sequence spans 436 residues: ABC transporter permease YtrF (436 aa).

The signal sequence occupies residues 1 to 31 (MRFKDQVHFIRRNMKKNRLRVFMTILATTMA). C32 is lipidated: N-palmitoyl cysteine. C32 is lipidated: S-diacylglycerol cysteine. Residues 115–165 (NMNDELKANMELEKGRVAKSENEIVVGYDFAKRLLTKKESEEYNKKIEEAK) adopt a coiled-coil conformation. A run of 3 helical transmembrane segments spans residues 293–313 (FKIG…IGIF), 350–370 (YIGI…SYLV), and 396–416 (IPAS…VISG).

The protein belongs to the ABC-4 integral membrane protein family. As to quaternary structure, the complex is composed of 2 ATP-binding proteins (YtrB and YtrE), 2 transmembrane proteins (YtrC and YtrD) and a solute-binding protein (YtrF).

Its subcellular location is the cell membrane. In terms of biological role, part of the ABC transporter complex YtrBCDEF that plays a role in acetoin utilization during stationary phase and sporulation. The polypeptide is ABC transporter permease YtrF (ytrF) (Bacillus subtilis (strain 168)).